The primary structure comprises 99 residues: Aspartyl/glutamyl-tRNA(Asn/Gln) amidotransferase subunit C (99 aa).

It belongs to the GatC family. In terms of assembly, heterotrimer of A, B and C subunits.

The enzyme catalyses L-glutamyl-tRNA(Gln) + L-glutamine + ATP + H2O = L-glutaminyl-tRNA(Gln) + L-glutamate + ADP + phosphate + H(+). It carries out the reaction L-aspartyl-tRNA(Asn) + L-glutamine + ATP + H2O = L-asparaginyl-tRNA(Asn) + L-glutamate + ADP + phosphate + 2 H(+). Its function is as follows. Allows the formation of correctly charged Asn-tRNA(Asn) or Gln-tRNA(Gln) through the transamidation of misacylated Asp-tRNA(Asn) or Glu-tRNA(Gln) in organisms which lack either or both of asparaginyl-tRNA or glutaminyl-tRNA synthetases. The reaction takes place in the presence of glutamine and ATP through an activated phospho-Asp-tRNA(Asn) or phospho-Glu-tRNA(Gln). The polypeptide is Aspartyl/glutamyl-tRNA(Asn/Gln) amidotransferase subunit C (Burkholderia vietnamiensis (strain G4 / LMG 22486) (Burkholderia cepacia (strain R1808))).